The primary structure comprises 150 residues: Large ribosomal subunit protein uL13 (150 aa).

It belongs to the universal ribosomal protein uL13 family. Part of the 50S ribosomal subunit.

This protein is one of the early assembly proteins of the 50S ribosomal subunit, although it is not seen to bind rRNA by itself. It is important during the early stages of 50S assembly. The protein is Large ribosomal subunit protein uL13 of Chlamydia abortus (strain DSM 27085 / S26/3) (Chlamydophila abortus).